A 226-amino-acid polypeptide reads, in one-letter code: Probable peroxiredoxin prdx-3 (226 aa).

The Thioredoxin domain maps to L33–F191. The active-site Cysteine sulfenic acid (-SOH) intermediate is the C78.

It belongs to the peroxiredoxin family. AhpC/Prx1 subfamily. Homodimer; disulfide-linked, upon oxidation.

The catalysed reaction is a hydroperoxide + [thioredoxin]-dithiol = an alcohol + [thioredoxin]-disulfide + H2O. Thiol-specific peroxidase that catalyzes the reduction of hydrogen peroxide and organic hydroperoxides to water and alcohols, respectively. Plays a role in cell protection against oxidative stress by detoxifying peroxides and as sensor of hydrogen peroxide-mediated signaling events. The polypeptide is Probable peroxiredoxin prdx-3 (prdx-3) (Caenorhabditis elegans).